We begin with the raw amino-acid sequence, 339 residues long: Probable N5-carboxyaminoimidazole ribonucleotide mutase (339 aa).

Ser-11, Asp-14, and Arg-41 together coordinate substrate.

It belongs to the AIR carboxylase family. Class I subfamily.

The catalysed reaction is 5-carboxyamino-1-(5-phospho-D-ribosyl)imidazole + H(+) = 5-amino-1-(5-phospho-D-ribosyl)imidazole-4-carboxylate. Its pathway is purine metabolism; IMP biosynthesis via de novo pathway; 5-amino-1-(5-phospho-D-ribosyl)imidazole-4-carboxylate from 5-amino-1-(5-phospho-D-ribosyl)imidazole (N5-CAIR route): step 2/2. Catalyzes the conversion of N5-carboxyaminoimidazole ribonucleotide (N5-CAIR) to 4-carboxy-5-aminoimidazole ribonucleotide (CAIR). This is Probable N5-carboxyaminoimidazole ribonucleotide mutase from Methanobrevibacter smithii.